The sequence spans 471 residues: Histidinol dehydrogenase (471 aa).

3 residues coordinate NAD(+): Tyr139, Gln204, and Asn236. The substrate site is built by Thr259, Gln281, and His284. Positions 281 and 284 each coordinate Zn(2+). Active-site proton acceptor residues include Glu350 and His351. Substrate is bound by residues His351, Asp384, Glu438, and His443. Asp384 is a Zn(2+) binding site. His443 provides a ligand contact to Zn(2+).

This sequence belongs to the histidinol dehydrogenase family. Requires Zn(2+) as cofactor.

The catalysed reaction is L-histidinol + 2 NAD(+) + H2O = L-histidine + 2 NADH + 3 H(+). It participates in amino-acid biosynthesis; L-histidine biosynthesis; L-histidine from 5-phospho-alpha-D-ribose 1-diphosphate: step 9/9. Functionally, catalyzes the sequential NAD-dependent oxidations of L-histidinol to L-histidinaldehyde and then to L-histidine. The sequence is that of Histidinol dehydrogenase from Bifidobacterium longum (strain NCC 2705).